Reading from the N-terminus, the 512-residue chain is Serine/threonine-protein kinase BSK1 (512 aa).

G2 carries N-myristoyl glycine lipidation. The segment at 8-48 (FSGDNPLGKDGVQPQPLSQNNHGGATTADNGGSGGASGVGG) is disordered. Gly residues predominate over residues 38–48 (GGSGGASGVGG). Residues 76 to 331 (DNIVSESGEK…DLVATLAPLQ (256 aa)) enclose the Protein kinase domain. ATP contacts are provided by residues 82 to 90 (SGEKAPNLV) and K104. The active-site Proton acceptor is D198. S230 is subject to Phosphoserine. Positions 483–508 (AKLNMNTDAADMLNEAAQLEEKRQRG) form a coiled coil.

It belongs to the protein kinase superfamily. Ser/Thr protein kinase family. In terms of assembly, interacts with BRI1. Interacts with ASK7/BIN2, BSK5, BSK6, BSK8 and BSK11. Interacts with FLS2. Phosphorylated at Ser-230 by BRI1 upon brassinolide (BL) treatment. Phosphorylation at Ser-230 weakens the interaction between BSK1 and BRI1. Phosphorylated by ASK7/BIN2 and ASK9/BIL2.

It localises to the cell membrane. It carries out the reaction L-seryl-[protein] + ATP = O-phospho-L-seryl-[protein] + ADP + H(+). The catalysed reaction is L-threonyl-[protein] + ATP = O-phospho-L-threonyl-[protein] + ADP + H(+). Serine/threonine kinase that acts as a positive regulator of brassinosteroid (BR) signaling downstream of the receptor kinase BRI1. Mediates signal transduction from BRI1 by functioning as substrate of BRI1. Functions as a positive regulator of plant immunity. May be involved in the regulation of pattern-triggered immunity (PTI) downstream of the flagellin receptor FLS2. Possesses kinase activity in vitro. Kinase activity is required for its function in innate immunity. The chain is Serine/threonine-protein kinase BSK1 from Arabidopsis thaliana (Mouse-ear cress).